The sequence spans 163 residues: Putative pre-16S rRNA nuclease (163 aa).

It belongs to the YqgF nuclease family.

The protein resides in the cytoplasm. Could be a nuclease involved in processing of the 5'-end of pre-16S rRNA. This is Putative pre-16S rRNA nuclease from Rhodopseudomonas palustris (strain BisA53).